The following is a 388-amino-acid chain: Probable ubiquitin-conjugating enzyme E2 L709 (388 aa).

The 160-residue stretch at 3–162 (NVHKRVIKDI…GNDLMVQKLF (160 aa)) folds into the UBC core domain. C95 serves as the catalytic Glycyl thioester intermediate. The interval 195–388 (VEEKSAKTSK…SSKSSKTGKK (194 aa)) is disordered. Composition is skewed to acidic residues over residues 221-238 (SEEE…DSES) and 246-297 (DVVD…ESEE). The span at 310 to 388 (KTTTKSSSTK…SSKSSKTGKK (79 aa)) shows a compositional bias: low complexity.

It belongs to the ubiquitin-conjugating enzyme family.

It carries out the reaction S-ubiquitinyl-[E1 ubiquitin-activating enzyme]-L-cysteine + [E2 ubiquitin-conjugating enzyme]-L-cysteine = [E1 ubiquitin-activating enzyme]-L-cysteine + S-ubiquitinyl-[E2 ubiquitin-conjugating enzyme]-L-cysteine.. It functions in the pathway protein modification; protein ubiquitination. In terms of biological role, catalyzes the covalent attachment of ubiquitin to other proteins. The protein is Probable ubiquitin-conjugating enzyme E2 L709 of Acanthamoeba polyphaga (Amoeba).